Reading from the N-terminus, the 427-residue chain is C4-dicarboxylate transport protein (427 aa).

Helical transmembrane passes span 5–25 (IFSS…FLGH), 44–64 (LIKM…IAGM), 76–96 (IALL…LCVV), 142–162 (IGAF…LFGF), 184–206 (VIFG…AMAF), 222–242 (LIAC…GSIA), 307–327 (IYLT…LDLF), 330–350 (ITLL…TGSG), and 352–372 (IVLA…LALI).

This sequence belongs to the dicarboxylate/amino acid:cation symporter (DAACS) (TC 2.A.23) family.

Its subcellular location is the cell inner membrane. Responsible for the transport of dicarboxylates such as succinate, fumarate, and malate from the periplasm across the membrane. This chain is C4-dicarboxylate transport protein, found in Aeromonas salmonicida (strain A449).